A 1047-amino-acid polypeptide reads, in one-letter code: Jouberin (1047 aa).

Basic and acidic residues-rich tracts occupy residues 1–17 (MEQE…EKVR) and 77–86 (LLHDDKLGSE). Disordered stretches follow at residues 1–44 (MEQE…LTEA) and 67–185 (EQLT…SPVH). An interaction with HAP1 region spans residues 1–285 (MEQETPEKVD…IFNENFPYLL (285 aa)). Basic residues predominate over residues 87–96 (KRKKKKKKKV). Basic and acidic residues predominate over residues 116–132 (GEQKKEGAPEGSHHREG). Over residues 150 to 160 (PKPKKMKKKPK) the composition is skewed to basic residues. The segment covering 173–185 (GVHEITGRDSPVH) has biased composition (basic and acidic residues). WD repeat units follow at residues 458–500 (AGER…FMRE), 503–542 (GHLN…TSTF), 546–586 (PHPS…DAAI), 593–632 (VHKS…TDVQ), 649–688 (FRGV…ARKF), 692–731 (ANYR…QVAM), and 736–777 (PFKS…AQQE). The residue at position 854 (serine 854) is a Phosphoserine. The SH3 domain maps to 903 to 963 (DPPPMVVALY…PANHVASETL (61 aa)). Composition is skewed to basic and acidic residues over residues 964 to 1003 (YRDS…RFLD) and 1012 to 1040 (GHSE…EPTV). Residues 964 to 1047 (YRDSPPKVKE…PTVRKVTLIE (84 aa)) form a disordered region. Serine 975 carries the phosphoserine modification.

As to quaternary structure, self-associates. Part of the tectonic-like complex (also named B9 complex). Interacts with MKS1. Interacts with NPHP1; probably as heterodimers and/or AHI1(2):NPHP1(2) heterotetramers. Interacts (via SH3 domain) with the dynamin GTPase DNM2. Interacts with HAP1; probably as AHI1(2):HAP1(2) heterotetramers. Interacts with RAB8A. Interacts with CEND1. Interacts with SPATA7.

It is found in the cytoplasm. The protein resides in the cytoskeleton. Its subcellular location is the cilium basal body. The protein localises to the microtubule organizing center. It localises to the centrosome. It is found in the centriole. The protein resides in the cell junction. Its subcellular location is the adherens junction. Its function is as follows. Involved in vesicle trafficking and required for ciliogenesis, formation of primary non-motile cilium, and recruitment of RAB8A to the basal body of primary cilium. Component of the tectonic-like complex, a complex localized at the transition zone of primary cilia and acting as a barrier that prevents diffusion of transmembrane proteins between the cilia and plasma membranes. Involved in neuronal differentiation. As a positive modulator of classical Wnt signaling, may play a crucial role in ciliary signaling during cerebellum embryonic development. This is Jouberin (Ahi1) from Rattus norvegicus (Rat).